The primary structure comprises 423 residues: Putative gustatory receptor 97a (423 aa).

The Cytoplasmic portion of the chain corresponds to 1–31 (MRFLRRQTRRLRSIWQRSLPVRFRRGKLHTQ). A helical membrane pass occupies residues 32 to 52 (LVTICLYATVFLNILYGVYLG). Residues 53 to 65 (RFSFRRKKFVFSK) lie on the Extracellular side of the membrane. The helical transmembrane segment at 66 to 86 (GLTIYSLFVATFFALFYIWNI) threads the bilayer. The Cytoplasmic portion of the chain corresponds to 87 to 99 (YNEISTGQINLRD). A helical membrane pass occupies residues 100–120 (TIGIYCYMNVCVCLFNYVTQW). Over 121–152 (EKTLQIIRFQNSVPLFKVLDSLDISAMIVWRA) the chain is Extracellular. The helical transmembrane segment at 153–173 (FIYGLLKIVFCPLITYITLIL) threads the bilayer. The Cytoplasmic portion of the chain corresponds to 174 to 200 (YHRRSISESQWTSVTTTKTMLPLIVSN). A helical membrane pass occupies residues 201–221 (QINNCFFGGLVLANLIFAAVN). Residues 222-278 (RKLHGIVKEANMLQSPVQMNLHKPYYRMRRFCELADLLDELARKYGFTASRSKNYLR) are Extracellular-facing. A helical transmembrane segment spans residues 279 to 299 (FTDWSMVLSMLMNLLGITMGC). Topologically, residues 300-317 (YNQYLAIADHYINEEPFD) are cytoplasmic. The helical transmembrane segment at 318-338 (LFLAIVLVVFLAVPFLELVMV) threads the bilayer. The Extracellular segment spans residues 339–423 (ARISNQTLTR…SDLTLRFSLK (85 aa)). Residues asparagine 343 and asparagine 393 are each glycosylated (N-linked (GlcNAc...) asparagine).

Belongs to the insect chemoreceptor superfamily. Gustatory receptor (GR) family. Gr22e subfamily. As to expression, in larvae, is expressed in neurons of the terminal external chemosensory organ.

The protein resides in the cell membrane. In terms of biological role, probable gustatory receptor which mediates acceptance or avoidance behavior, depending on its substrates. In Drosophila melanogaster (Fruit fly), this protein is Putative gustatory receptor 97a (Gr97a).